The chain runs to 196 residues: Signaling threshold-regulating transmembrane adapter 1 (196 aa).

A signal peptide spans 1–24 (MNQADPRLRAVCLWTLTSAAMSRG). Over 25 to 40 (DNCTDLLALGIPSITQ) the chain is Extracellular. A glycan (N-linked (GlcNAc...) asparagine) is linked at Asn26. Residues 41–61 (AWGLWVLLGAVTLLFLISLAA) form a helical membrane-spanning segment. Topologically, residues 62–196 (HLSQWTRGRS…AYANSQPAAS (135 aa)) are cytoplasmic. Ser80 and Ser83 each carry phosphoserine. Residue Tyr90 is modified to Phosphotyrosine. The tract at residues 90 to 93 (YGNL) is interaction with GRB2. Ser102 is modified (phosphoserine). Tyr127 bears the Phosphotyrosine mark. The disordered stretch occupies residues 132–167 (LRPPQGRIPGPGTPVKYSEVVLDSEPKSQASGPEPE). Position 144 is a phosphothreonine (Thr144). Positions 146-151 (VKYSEV) are interaction with PTPN11. A phosphotyrosine mark is found at Tyr148 and Tyr169. The segment at 169–172 (YASV) is interaction with CSK. Ser182 is subject to Phosphoserine. A Phosphotyrosine modification is found at Tyr188. The interval 188–191 (YANS) is interaction with GRB2.

As to quaternary structure, homodimer; disulfide-linked. When phosphorylated, interacts with PTPN11/SHP2, GRB2 and CSK. Phosphorylated on tyrosines by LCK, FYN or ZAP70 upon TCR activation; which leads to the recruitment of PTPN11, GRB2 and CSK. In terms of tissue distribution, specifically expressed in T- and B-cells. Present in plasma cells but not in germinal center B-cells (at protein level). Expressed in T- and B-cell lymphoma.

It localises to the cell membrane. Negatively regulates TCR (T-cell antigen receptor)-mediated signaling in T-cells. Involved in positive selection of T-cells. The chain is Signaling threshold-regulating transmembrane adapter 1 (SIT1) from Homo sapiens (Human).